The following is a 116-amino-acid chain: Large ribosomal subunit protein bL20 (116 aa).

It belongs to the bacterial ribosomal protein bL20 family.

Binds directly to 23S ribosomal RNA and is necessary for the in vitro assembly process of the 50S ribosomal subunit. It is not involved in the protein synthesizing functions of that subunit. This is Large ribosomal subunit protein bL20 from Mycoplasmopsis agalactiae (strain NCTC 10123 / CIP 59.7 / PG2) (Mycoplasma agalactiae).